The following is a 399-amino-acid chain: Elongation factor Tu (399 aa).

A tr-type G domain is found at 10–204; sequence KPHVNIGTIG…AVDASIPEPE (195 aa). Residues 19-26 are G1; sequence GHVDHGKT. GTP is bound at residue 19–26; it reads GHVDHGKT. Residue T26 coordinates Mg(2+). The interval 60 to 64 is G2; sequence GITIN. Positions 81 to 84 are G3; the sequence is DCPG. GTP is bound by residues 81–85 and 136–139; these read DCPGH and NKCD. Residues 136–139 form a G4 region; it reads NKCD. The tract at residues 174–176 is G5; the sequence is SGL.

This sequence belongs to the TRAFAC class translation factor GTPase superfamily. Classic translation factor GTPase family. EF-Tu/EF-1A subfamily. In terms of assembly, monomer.

It is found in the cytoplasm. It catalyses the reaction GTP + H2O = GDP + phosphate + H(+). GTP hydrolase that promotes the GTP-dependent binding of aminoacyl-tRNA to the A-site of ribosomes during protein biosynthesis. In Prochlorococcus marinus (strain AS9601), this protein is Elongation factor Tu.